The chain runs to 919 residues: Isoleucine--tRNA ligase (919 aa).

Positions 57-67 match the 'HIGH' region motif; sequence PYANGHTHIGH. L-isoleucyl-5'-AMP is bound at residue glutamate 569. The 'KMSKS' region signature appears at 610–614; sequence KMSKS. Lysine 613 serves as a coordination point for ATP. Positions 895, 898, 910, and 913 each coordinate Zn(2+).

The protein belongs to the class-I aminoacyl-tRNA synthetase family. IleS type 1 subfamily. In terms of assembly, monomer. The cofactor is Zn(2+).

Its subcellular location is the cytoplasm. It carries out the reaction tRNA(Ile) + L-isoleucine + ATP = L-isoleucyl-tRNA(Ile) + AMP + diphosphate. In terms of biological role, catalyzes the attachment of isoleucine to tRNA(Ile). As IleRS can inadvertently accommodate and process structurally similar amino acids such as valine, to avoid such errors it has two additional distinct tRNA(Ile)-dependent editing activities. One activity is designated as 'pretransfer' editing and involves the hydrolysis of activated Val-AMP. The other activity is designated 'posttransfer' editing and involves deacylation of mischarged Val-tRNA(Ile). The protein is Isoleucine--tRNA ligase of Sulfurimonas denitrificans (strain ATCC 33889 / DSM 1251) (Thiomicrospira denitrificans (strain ATCC 33889 / DSM 1251)).